Reading from the N-terminus, the 135-residue chain is Protein KRTCAP2 homolog (135 aa).

The next 4 membrane-spanning stretches (helical) occupy residues 1–21, 35–55, 69–89, and 93–113; these read MAVS…LLFA, PMAI…LTAI, TKLI…SGMV, and CITT…RISI.

The protein belongs to the KRTCAP2 family. In terms of assembly, component of the oligosaccharyltransferase (OST) complex.

It localises to the membrane. Subunit of the oligosaccharyl transferase (OST) complex that catalyzes the initial transfer of a defined glycan (Glc(3)Man(9)GlcNAc(2) in eukaryotes) from the lipid carrier dolichol-pyrophosphate to an asparagine residue within an Asn-X-Ser/Thr consensus motif in nascent polypeptide chains, the first step in protein N-glycosylation. N-glycosylation occurs cotranslationally and the complex associates with the Sec61 complex at the channel-forming translocon complex that mediates protein translocation across the endoplasmic reticulum (ER). All subunits are required for a maximal enzyme activity. This Ixodes scapularis (Black-legged tick) protein is Protein KRTCAP2 homolog.